The sequence spans 121 residues: Small ribosomal subunit protein bS6 (121 aa).

The tract at residues 99–121 (PSLMMRNVEREEARKTQQQEFAA) is disordered. Residues 105–115 (NVEREEARKTQ) are compositionally biased toward basic and acidic residues.

The protein belongs to the bacterial ribosomal protein bS6 family.

Binds together with bS18 to 16S ribosomal RNA. The polypeptide is Small ribosomal subunit protein bS6 (Polaromonas naphthalenivorans (strain CJ2)).